A 59-amino-acid chain; its full sequence is Venom protein 37.1 (59 aa).

Residues 1–18 (MVSTLMIASVKLRLYCTA) form the signal peptide.

It belongs to the non-disulfide-bridged peptide (NDBP) superfamily. Long chain multifunctional peptide (group 2) family. In terms of tissue distribution, expressed by the venom gland.

The protein localises to the secreted. The protein is Venom protein 37.1 of Lychas mucronatus (Chinese swimming scorpion).